The sequence spans 155 residues: Large ribosomal subunit protein uL22c (155 aa).

The protein belongs to the universal ribosomal protein uL22 family. As to quaternary structure, part of the 50S ribosomal subunit.

It is found in the plastid. Its subcellular location is the chloroplast. Its function is as follows. This protein binds specifically to 23S rRNA. Functionally, the globular domain of the protein is located near the polypeptide exit tunnel on the outside of the subunit, while an extended beta-hairpin is found that lines the wall of the exit tunnel in the center of the 70S ribosome. This Solanum tuberosum (Potato) protein is Large ribosomal subunit protein uL22c (rpl22).